We begin with the raw amino-acid sequence, 83 residues long: MATKKNQILVPDHIYVPKHEIISKTEAEEVLKKYNCKPTELPLIFVNDPAILGLGVKPGDMIKITRKSPTAGEGLYYRYVVEV.

Belongs to the archaeal Rpo5/eukaryotic RPB5 RNA polymerase subunit family. Part of the RNA polymerase complex.

The protein localises to the cytoplasm. The catalysed reaction is RNA(n) + a ribonucleoside 5'-triphosphate = RNA(n+1) + diphosphate. In terms of biological role, DNA-dependent RNA polymerase (RNAP) catalyzes the transcription of DNA into RNA using the four ribonucleoside triphosphates as substrates. This is DNA-directed RNA polymerase subunit Rpo5 from Nitrosopumilus maritimus (strain SCM1).